We begin with the raw amino-acid sequence, 259 residues long: Thiazole synthase (259 aa).

K99 (schiff-base intermediate with DXP) is an active-site residue. 1-deoxy-D-xylulose 5-phosphate is bound by residues G160, 186–187 (AG), and 208–209 (NT).

This sequence belongs to the ThiG family. In terms of assembly, homotetramer. Forms heterodimers with either ThiH or ThiS.

The protein localises to the cytoplasm. It catalyses the reaction [ThiS sulfur-carrier protein]-C-terminal-Gly-aminoethanethioate + 2-iminoacetate + 1-deoxy-D-xylulose 5-phosphate = [ThiS sulfur-carrier protein]-C-terminal Gly-Gly + 2-[(2R,5Z)-2-carboxy-4-methylthiazol-5(2H)-ylidene]ethyl phosphate + 2 H2O + H(+). It participates in cofactor biosynthesis; thiamine diphosphate biosynthesis. Its function is as follows. Catalyzes the rearrangement of 1-deoxy-D-xylulose 5-phosphate (DXP) to produce the thiazole phosphate moiety of thiamine. Sulfur is provided by the thiocarboxylate moiety of the carrier protein ThiS. In vitro, sulfur can be provided by H(2)S. The chain is Thiazole synthase from Porphyromonas gingivalis (strain ATCC 33277 / DSM 20709 / CIP 103683 / JCM 12257 / NCTC 11834 / 2561).